We begin with the raw amino-acid sequence, 172 residues long: Translation initiation factor IF-3 (172 aa).

This sequence belongs to the IF-3 family. Monomer.

Its subcellular location is the cytoplasm. IF-3 binds to the 30S ribosomal subunit and shifts the equilibrium between 70S ribosomes and their 50S and 30S subunits in favor of the free subunits, thus enhancing the availability of 30S subunits on which protein synthesis initiation begins. The chain is Translation initiation factor IF-3 from Geobacter metallireducens (strain ATCC 53774 / DSM 7210 / GS-15).